The following is a 540-amino-acid chain: Telomerase Cajal body protein 1 (540 aa).

The span at 1-10 (MKTPEAPPLA) shows a compositional bias: pro residues. The disordered stretch occupies residues 1-126 (MKTPEAPPLA…GEDVEGVSEE (126 aa)). Phosphoserine is present on residues Ser26, Ser30, Ser54, Ser64, Ser85, and Ser90. Over residues 116–126 (PGEDVEGVSEE) the composition is skewed to acidic residues. 6 WD repeats span residues 158-197 (QPEN…YNEG), 213-258 (EGDT…LRAS), 263-304 (NHLD…RDCE), 314-355 (GQSG…ALLG), 356-396 (GHQG…HPLW), and 402-441 (VTTN…LESK). At Thr480 the chain carries Phosphothreonine. Ser482 bears the Phosphoserine mark. The interval 520–540 (SDAHQEEMGQGRTEGGGGEFT) is disordered. Residues 531–540 (RTEGGGGEFT) show a composition bias toward gly residues.

Belongs to the TCAB1 family. In terms of assembly, component of the telomerase holoenzyme complex composed of one molecule of TERT, one molecule of WRAP53/TCAB1, two molecules of H/ACA ribonucleoprotein complex subunits DKC1, NOP10, NHP2 and GAR1, and a telomerase RNA template component (TERC). The telomerase holoenzyme complex is associated with TEP1, SMG6/EST1A and POT1. Interacts with the chaperonin-containing T-complex (TRiC) complex; which mediates the folding of WRAP53/TCAB1. Interacts with COIL. Interacts with SMN1. Interacts with RNF8. Interacts with histone H2AX. In terms of processing, phosphorylated at Ser-64 by ATM in response to DNA damage, promoting its interaction with histone H2AX and localization to sites of DNA double-strand breaks.

Its subcellular location is the nucleus. It localises to the cajal body. It is found in the chromosome. The protein resides in the telomere. Its function is as follows. RNA chaperone that plays a key role in telomere maintenance and RNA localization to Cajal bodies. Specifically recognizes and binds the Cajal body box (CAB box) present in both small Cajal body RNAs (scaRNAs) and telomerase RNA template component (TERC). Essential component of the telomerase holoenzyme complex, a ribonucleoprotein complex essential for the replication of chromosome termini that elongates telomeres in most eukaryotes. In the telomerase holoenzyme complex, required to stimulate the catalytic activity of the complex. Acts by specifically binding the CAB box of the TERC RNA and controlling the folding of the CR4/CR5 region of the TERC RNA, a critical step for telomerase activity. In addition, also controls telomerase holoenzyme complex localization to Cajal body. During S phase, required for delivery of TERC to telomeres during S phase and for telomerase activity. In addition to its role in telomere maintenance, also required for Cajal body formation, probably by mediating localization of scaRNAs to Cajal bodies. Also plays a role in DNA repair: phosphorylated by ATM in response to DNA damage and relocalizes to sites of DNA double-strand breaks to promote the repair of DNA double-strand breaks. Acts by recruiting the ubiquitin ligase RNF8 to DNA breaks and promote both homologous recombination (HR) and non-homologous end joining (NHEJ). This Bos taurus (Bovine) protein is Telomerase Cajal body protein 1.